Reading from the N-terminus, the 442-residue chain is Cell division protein FtsA (442 aa).

A disordered region spans residues 401-428 (VTSYDNDSYDAPEETVYDEPEQKKSDED). Residues 407 to 419 (DSYDAPEETVYDE) are compositionally biased toward acidic residues.

The protein belongs to the FtsA/MreB family. As to quaternary structure, self-interacts. Interacts with FtsZ.

The protein localises to the cell membrane. In terms of biological role, cell division protein that is involved in the assembly of the Z ring. May serve as a membrane anchor for the Z ring. This chain is Cell division protein FtsA, found in Enterococcus hirae.